The following is a 418-amino-acid chain: F-box/kelch-repeat protein SKIP20 (418 aa).

The F-box domain maps to 14 to 61 (DLIPGLPEELAIECLVRVPFQFHSSIKSVCRSWKCVISSRSFIKERIG). The disordered stretch occupies residues 79 to 104 (PSPAMMEGGEMSQKKKEEEEGESQMT). Kelch repeat units lie at residues 104–150 (TQQL…AIQD), 153–206 (KVLL…SVGS), 208–255 (KVYV…SMAT), and 258–314 (GFCV…EFPG).

As to quaternary structure, part of a SCF (ASK-cullin-F-box) protein ligase complex. Interacts with SKP1A/ASK1 and SPK1B/ASK2.

The protein resides in the nucleus. It participates in protein modification; protein ubiquitination. Functionally, component of SCF(ASK-cullin-F-box) E3 ubiquitin ligase complexes, which may mediate the ubiquitination and subsequent proteasomal degradation of target proteins. This chain is F-box/kelch-repeat protein SKIP20 (SKIP20), found in Arabidopsis thaliana (Mouse-ear cress).